Reading from the N-terminus, the 505-residue chain is ATP synthase subunit alpha (505 aa).

Position 171 to 178 (171 to 178) interacts with ATP; that stretch reads GDRQTGKT.

This sequence belongs to the ATPase alpha/beta chains family. F-type ATPases have 2 components, CF(1) - the catalytic core - and CF(0) - the membrane proton channel. CF(1) has five subunits: alpha(3), beta(3), gamma(1), delta(1), epsilon(1). CF(0) has three main subunits: a(1), b(2) and c(9-12). The alpha and beta chains form an alternating ring which encloses part of the gamma chain. CF(1) is attached to CF(0) by a central stalk formed by the gamma and epsilon chains, while a peripheral stalk is formed by the delta and b chains.

It localises to the cell inner membrane. It carries out the reaction ATP + H2O + 4 H(+)(in) = ADP + phosphate + 5 H(+)(out). Functionally, produces ATP from ADP in the presence of a proton gradient across the membrane. The alpha chain is a regulatory subunit. The protein is ATP synthase subunit alpha of Aliarcobacter butzleri (strain RM4018) (Arcobacter butzleri).